Reading from the N-terminus, the 397-residue chain is (S)-8-oxocitronellyl enol synthase ISY2 (397 aa).

Residues 36–38 (TGL), 64–65 (RR), 82–83 (DV), 106–107 (TW), Gln-144, Tyr-180, Ile-207, and 214–216 (SMM) contribute to the NADP(+) site. Tyr-180 is an active-site residue.

Belongs to the short-chain dehydrogenases/reductases (SDR) family.

It catalyses the reaction (S)-8-oxocitronellyl enol + NADP(+) = (6E)-8-oxogeranial + NADPH + H(+). The enzyme catalyses (S)-8-oxocitronellyl enol + NAD(+) = (6E)-8-oxogeranial + NADH + H(+). Its function is as follows. Iridoid synthase that catalyzes the first step in generation of the iridoid ring scaffold using the linear monoterpene (6E)-8-oxogeranial as substrate. Iridoids comprise a large family of distinctive bicyclic monoterpenes that possess a wide range of pharmacological activities, including anticancer, anti-inflammatory, antifungal and antibacterial activities. Catalyzes the conversion of the linear monoterpene (6E)-8-oxogeranial to (S)-8-oxocitronellyl enol, a precursor of nepetalactones, which are metabolites that are both insect-repellent and have euphoric effect in cats. The sequence is that of (S)-8-oxocitronellyl enol synthase ISY2 from Nepeta cataria (Catnip).